The chain runs to 110 residues: Large ribosomal subunit protein uL24 (110 aa).

This sequence belongs to the universal ribosomal protein uL24 family. Part of the 50S ribosomal subunit.

Its function is as follows. One of two assembly initiator proteins, it binds directly to the 5'-end of the 23S rRNA, where it nucleates assembly of the 50S subunit. One of the proteins that surrounds the polypeptide exit tunnel on the outside of the subunit. This chain is Large ribosomal subunit protein uL24, found in Ureaplasma parvum serovar 3 (strain ATCC 27815 / 27 / NCTC 11736).